A 105-amino-acid chain; its full sequence is Met repressor (105 aa).

This sequence belongs to the MetJ family. Homodimer.

It is found in the cytoplasm. In terms of biological role, this regulatory protein, when combined with SAM (S-adenosylmethionine) represses the expression of the methionine regulon and of enzymes involved in SAM synthesis. The polypeptide is Met repressor (Proteus mirabilis (strain HI4320)).